A 447-amino-acid polypeptide reads, in one-letter code: Phosphoglucosamine mutase (447 aa).

The Phosphoserine intermediate role is filled by Ser-102. 4 residues coordinate Mg(2+): Ser-102, Asp-241, Asp-243, and Asp-245. Ser-102 is subject to Phosphoserine.

The protein belongs to the phosphohexose mutase family. The cofactor is Mg(2+). In terms of processing, activated by phosphorylation.

It carries out the reaction alpha-D-glucosamine 1-phosphate = D-glucosamine 6-phosphate. Its function is as follows. Catalyzes the conversion of glucosamine-6-phosphate to glucosamine-1-phosphate. This chain is Phosphoglucosamine mutase, found in Ruegeria sp. (strain TM1040) (Silicibacter sp.).